The following is a 156-amino-acid chain: ATP synthase subunit b (156 aa).

Residues 1–21 (MNVTVTLIGQMVAFGILVWFV) form a helical membrane-spanning segment.

This sequence belongs to the ATPase B chain family. In terms of assembly, F-type ATPases have 2 components, F(1) - the catalytic core - and F(0) - the membrane proton channel. F(1) has five subunits: alpha(3), beta(3), gamma(1), delta(1), epsilon(1). F(0) has three main subunits: a(1), b(2) and c(10-14). The alpha and beta chains form an alternating ring which encloses part of the gamma chain. F(1) is attached to F(0) by a central stalk formed by the gamma and epsilon chains, while a peripheral stalk is formed by the delta and b chains.

The protein localises to the cell inner membrane. Its function is as follows. F(1)F(0) ATP synthase produces ATP from ADP in the presence of a proton or sodium gradient. F-type ATPases consist of two structural domains, F(1) containing the extramembraneous catalytic core and F(0) containing the membrane proton channel, linked together by a central stalk and a peripheral stalk. During catalysis, ATP synthesis in the catalytic domain of F(1) is coupled via a rotary mechanism of the central stalk subunits to proton translocation. Component of the F(0) channel, it forms part of the peripheral stalk, linking F(1) to F(0). This chain is ATP synthase subunit b, found in Nitrosococcus oceani (strain ATCC 19707 / BCRC 17464 / JCM 30415 / NCIMB 11848 / C-107).